Reading from the N-terminus, the 187-residue chain is ECF RNA polymerase sigma factor SigK (187 aa).

The interval 30-96 (YDHTCTRVYG…RAVDRVRAEQ (67 aa)) is sigma-70 factor domain-2. Positions 53 to 56 (ETTQ) match the Interaction with polymerase core subunit RpoC motif. The sigma-70 factor domain-4 stretch occupies residues 133 to 182 (CLDGLTDTQRQCIELAYYGGLTYAEVSQRLATNLSTIKSRMRDALRGLRN). The segment at residues 155–174 (YAEVSQRLATNLSTIKSRMR) is a DNA-binding region (H-T-H motif).

This sequence belongs to the sigma-70 factor family. ECF subfamily. In terms of assembly, interacts transiently with the RNA polymerase catalytic core formed by RpoA, RpoB, RpoC and RpoZ (2 alpha, 1 beta, 1 beta' and 1 omega subunit) to form the RNA polymerase holoenzyme that can initiate transcription. Interacts (via sigma-70 factor domain 4) with anti-sigma-K factor RskA.

Sigma factors are initiation factors that promote the attachment of RNA polymerase to specific initiation sites and are then released. Extracytoplasmic function (ECF) sigma factors are held in an inactive form by an anti-sigma factor until released by regulated intramembrane proteolysis. The sequence is that of ECF RNA polymerase sigma factor SigK (sigK) from Mycobacterium ulcerans (strain Agy99).